Consider the following 609-residue polypeptide: MGESERSEAFGIPRDSPLSSGDAAELEQLRREAAVLREQLENAVGSHAPTRSARDIHQLEARIDSLAARNSKLMETLKEARQQLLALREEVDRLGQPPSGYGVLLATHDDDTVDVFTSGRKMRLTCSPNIDAASLKKGQTVRLNEALTVVEAGTFEAVGEISTLREILADGHRALVVGHADEERVVWLADPLIAEDLPDGLPEALNDDTRPRKLRPGDSLLVDTKAGYAFERIPKAEVEDLVLEEVPDVSYADIGGLSRQIEQIRDAVELPFLHKELYREYSLRPPKGVLLYGPPGCGKTLIAKAVANSLAKKMAEVRGDDAHEAKSYFLNIKGPELLNKFVGETERHIRLIFQRAREKASEGTPVIVFFDEMDSIFRTRGTGVSSDVETTVVPQLLSEIDGVEGLENVIVIGASNREDMIDPAILRPGRLDVKIKIERPDAEAAQDIYSKYLTEFLPVHADDLAEFDGDRSACIKAMIEKVVDRMYAEIDDNRFLEVTYANGDKEVMYFKDFNSGAMIQNVVDRAKKNAIKSVLETGQPGLRIQHLLDSIVDEFAENEDLPNTTNPDDWARISGKKGERIVYIRTLVTGKSSSASRAIDTESNLGQYL.

The segment at 1–24 is disordered; sequence MGESERSEAFGIPRDSPLSSGDAA. Positions 20 to 96 form a coiled coil; it reads SGDAAELEQL…LREEVDRLGQ (77 aa). 296–301 provides a ligand contact to ATP; the sequence is GCGKTL. The docks into pockets in the proteasome alpha-ring stretch occupies residues 608–609; it reads YL.

The protein belongs to the AAA ATPase family. In terms of assembly, homohexamer. Assembles into a hexameric ring structure that caps the 20S proteasome core. Strongly interacts with the prokaryotic ubiquitin-like protein Pup through a hydrophobic interface; the interacting region of ARC lies in its N-terminal coiled-coil domain. There is one Pup binding site per ARC hexamer ring. Upon ATP-binding, the C-terminus of ARC interacts with the alpha-rings of the proteasome core, possibly by binding to the intersubunit pockets.

It participates in protein degradation; proteasomal Pup-dependent pathway. Functionally, ATPase which is responsible for recognizing, binding, unfolding and translocation of pupylated proteins into the bacterial 20S proteasome core particle. May be essential for opening the gate of the 20S proteasome via an interaction with its C-terminus, thereby allowing substrate entry and access to the site of proteolysis. Thus, the C-termini of the proteasomal ATPase may function like a 'key in a lock' to induce gate opening and therefore regulate proteolysis. This is Proteasome-associated ATPase from Mycobacterium bovis (strain BCG / Pasteur 1173P2).